A 425-amino-acid polypeptide reads, in one-letter code: ADP-ribose glycohydrolase MACROD2 (425 aa).

Residues 59–240 enclose the Macro domain; sequence QETSQVKKSL…IYKKKMNEFF (182 aa). Residues 77 to 79, 90 to 92, and 97 to 102 each bind substrate; these read GDI, AAN, and GGGGVD. Lysine 170 is covalently cross-linked (Glycyl lysine isopeptide (Lys-Gly) (interchain with G-Cter in ubiquitin)). Substrate is bound by residues 185–191 and phenylalanine 224; that span reads ISTGIYG. A disordered region spans residues 243–425; sequence DDNNEEEEDV…EAKEQRNGTK (183 aa). A compositionally biased stretch (acidic residues) spans 244 to 262; it reads DNNEEEEDVEMKEDSDENG. A compositionally biased stretch (basic and acidic residues) spans 302–343; the sequence is EDFAKDENITKGGEVTDHSVRDQDHPDGQENDSTKNEIKIET. Over residues 344–360 the composition is skewed to polar residues; the sequence is ESQSSYMETEELSSNQE. Basic and acidic residues-rich tracts occupy residues 381–391 and 415–425; these read EGEKAPGEDTP and DEAKEQRNGTK.

It belongs to the MacroD-type family. MacroD1/2-like subfamily. As to quaternary structure, interacts with ADP-ribosylated PARP1.

The protein resides in the nucleus. It catalyses the reaction 2''-O-acetyl-ADP-D-ribose + H2O = ADP-D-ribose + acetate + H(+). It carries out the reaction 4-O-(ADP-D-ribosyl)-L-aspartyl-[protein] + H2O = L-aspartyl-[protein] + ADP-D-ribose + H(+). The catalysed reaction is 5-O-(ADP-D-ribosyl)-L-glutamyl-[protein] + H2O = L-glutamyl-[protein] + ADP-D-ribose + H(+). The enzyme catalyses alpha-NAD(+) + H2O = ADP-D-ribose + nicotinamide + H(+). Its activity is regulated as follows. Subject to product inhibition by ADP-ribose. Functionally, removes ADP-ribose from aspartate and glutamate residues in proteins bearing a single ADP-ribose moiety. Inactive towards proteins bearing poly-ADP-ribose. Deacetylates O-acetyl-ADP ribose, a signaling molecule generated by the deacetylation of acetylated lysine residues in histones and other proteins. This chain is ADP-ribose glycohydrolase MACROD2, found in Homo sapiens (Human).